We begin with the raw amino-acid sequence, 386 residues long: Palmitoyltransferase ZDHHC9 (386 aa).

Residues Met-1 to Lys-35 are Cytoplasmic-facing. The chain crosses the membrane as a helical span at residues Gly-36–Glu-56. Residues Cys-57 to His-63 are Lumenal-facing. Residues Leu-64–Leu-84 form a helical membrane-spanning segment. Topologically, residues Arg-85–Tyr-183 are cytoplasmic. A DHHC domain is found at Lys-139–Leu-189. Catalysis depends on Cys-169, which acts as the S-palmitoyl cysteine intermediate. Residues Phe-184–Val-204 traverse the membrane as a helical segment. The Lumenal portion of the chain corresponds to His-205 to Gly-224. The helical transmembrane segment at Thr-225–Phe-245 threads the bilayer. Residues His-246–His-386 lie on the Cytoplasmic side of the membrane. Polar residues predominate over residues Ser-306–Ser-334. The segment at Ser-306 to His-386 is disordered.

It belongs to the DHHC palmitoyltransferase family. ERF2/ZDHHC9 subfamily.

Its subcellular location is the endoplasmic reticulum membrane. The protein resides in the golgi apparatus membrane. The catalysed reaction is L-cysteinyl-[protein] + hexadecanoyl-CoA = S-hexadecanoyl-L-cysteinyl-[protein] + CoA. Palmitoyltransferase that catalyzes the addition of palmitate onto various protein substrates, such as ADRB2, GSDMD, HRAS, NRAS and CGAS. The sequence is that of Palmitoyltransferase ZDHHC9 from Danio rerio (Zebrafish).